The primary structure comprises 229 residues: Glucose-induced degradation protein 8-B homolog (229 aa).

Positions 26–58 constitute a LisH domain; the sequence is QRADMNRLIMNYLVTEGFKEAAEKFRMESGIEP. In terms of domain architecture, CTLH spans 64-121; the sequence is SLDERIKIREMVLKGQIQEAIALINSLHPELLDTNRYLYFHLQQQHLIELIRLRETEA.

Identified in the CTLH complex that contains at least MAEA, RMND5A (or alternatively its paralog RMND5B), GID8, WDR26, and RANBP9 and/or RANBP10. Interacts with CTNNB1.

Its subcellular location is the cytoplasm. The protein resides in the nucleus. In terms of biological role, core component of the CTLH E3 ubiquitin-protein ligase complex that selectively accepts ubiquitin from UBE2H and mediates ubiquitination and subsequent proteasomal degradation of target proteins. Acts as a positive regulator of Wnt signaling pathway by promoting beta-catenin (CTNNB1) nuclear accumulation. Required for normal Wnt signaling and normal dorsoventral patterning during embryogenesis. This chain is Glucose-induced degradation protein 8-B homolog (gid8b), found in Danio rerio (Zebrafish).